The sequence spans 528 residues: Vacuolar fusion protein MON1 homolog (528 aa).

Over residues 1-16 the composition is skewed to polar residues; that stretch reads MEVEQTSVRSDTNSTC. Residues 1–50 form a disordered region; sequence MEVEQTSVRSDTNSTCEYLDAEGDPESPNLYQEADPDQEAEQQNHSIISE.

It belongs to the MON1/SAND family. In terms of assembly, component of the Mon1-Ccz1 guanyl-nucleotide exchange factor complex made up of Mon1, Ccz1 and Bulli; the interaction of Bulli with the Mon1-Ccz1 heterodimer is mediated via the C-terminal Mic1 domain of Bulli. Mon1 and Ccz1 form a stable complex which displays Rab7 GEF activity with or without Bulli; GEF activity is enhanced by Bulli possibly by improving membrane association of the complex. Interacts with Rab5 and Rab7; preferentially binds GTP-bound Rab5 and GDP-bound Rab7.

The protein resides in the cytoplasm. It localises to the cytosol. With respect to regulation, the Rab7 guanyl-nucleotide exchange factor (GEF) activity of the Mon1-Ccz1 complex is autoinhibited by the N-terminal disordered region of Mon1. GEF activity is stimulated by Rab5-mediated recruitment to membranes. Part of the Mon1-Ccz1 guanyl-nucleotide exchange factor complex specific for Rab7 that promotes the exchange of GDP to GTP, converting Rab7 from an inactive GDP-bound form into an active GTP-bound form. Plays an important role in membrane trafficking through the secretory apparatus. Required for recruitment of Rab7 to endosomal and autophagosomal membranes to mediate endolysosomal and autolysosomal vesicle maturation. Required for fusion of multivesicular bodies and lysosomes but not their formation or trafficking. Involved in the replacement of Rab5 (and possibly Rab4) with Rab7, also known as Rab conversion or the Rab cascade, during endosomal maturation. The Mon1-Ccz1 complex is recruited to phosphatidylinositol 3-phosphate (PtdIns[3]P) enriched membranes by Rab5, which stimulates recruitment and guanyl-nucleotide exchange of Rab7. Together with Rab7 required for autolysosome formation in fat cells and autophagic degradation during starvation-induced basal and developmental autophagy. Involved in neuromuscular junction (NMJ) presynaptic bouton function and morphogenesis. Together with Rab7, regulates levels of postsynaptic glutamate receptor GluRIIA in the NMJ presynapse. The polypeptide is Vacuolar fusion protein MON1 homolog (Drosophila melanogaster (Fruit fly)).